Reading from the N-terminus, the 443-residue chain is UDP-N-acetylmuramate--L-alanine ligase (443 aa).

110–116 contacts ATP; the sequence is GAHGKTS.

It belongs to the MurCDEF family.

It localises to the cytoplasm. The catalysed reaction is UDP-N-acetyl-alpha-D-muramate + L-alanine + ATP = UDP-N-acetyl-alpha-D-muramoyl-L-alanine + ADP + phosphate + H(+). Its pathway is cell wall biogenesis; peptidoglycan biosynthesis. Cell wall formation. The polypeptide is UDP-N-acetylmuramate--L-alanine ligase (Streptococcus equi subsp. zooepidemicus (strain MGCS10565)).